A 436-amino-acid polypeptide reads, in one-letter code: Probable sodium/metabolite cotransporter BASS4, chloroplastic (436 aa).

A chloroplast-targeting transit peptide spans 1–47; that stretch reads MAIASTLASTQNPFLCLRQPPSPGNRSVVFRRCQDPCGRRWISRSIR. Helical transmembrane passes span 109 to 129, 131 to 151, 157 to 177, 195 to 215, 225 to 245, 257 to 277, 297 to 314, 328 to 348, and 403 to 423; these read FLPLALVSGVGLGFANPTLGC, ADKYSFTKISTCGIFIISGLT, IGAAVKGWPLGLFGLISILLL, LVTGLGIFCCMPTTLSSGVAL, LALAVTVASNLLGILTIPFWV, FPTDQLFRSLIVTLLIPLIIG, LFSKINAICLSLVPWIQV, VFLAAVGIGILLHLSLLAFNA, and PCVAAHLNQIMIDSVLVNLWL.

It belongs to the bile acid:sodium symporter (BASS) (TC 2.A.28) family.

The protein resides in the membrane. Its subcellular location is the plastid. It localises to the chloroplast envelope. In terms of biological role, may function as sodium-coupled metabolite transporter across the chloroplast envelope. The protein is Probable sodium/metabolite cotransporter BASS4, chloroplastic (BASS4) of Arabidopsis thaliana (Mouse-ear cress).